A 521-amino-acid polypeptide reads, in one-letter code: NAD(P)H-quinone oxidoreductase subunit 2 (521 aa).

The next 14 membrane-spanning stretches (helical) occupy residues 15-35 (ILPEGVLVISLILVLLGDITF), 42-62 (WTPYLAIASLAACLYLLYTQW), 79-99 (LSIVFRAIIALSTLVTILMSV), 109-126 (IGEFMTVLLTATVGAMFL), 131-153 (ELVMIFISLETLSIASYLMTGYM), 167-187 (LLIGAASSAVFLYGLSLLYGL), 208-228 (LALVISLVFVIASVSFKIAAV), 242-262 (PTPVVAFLSVGSKAAGFALAI), 276-296 (WQFIFTALAILSMVLGNVVAI), 304-324 (MLAYSSIGQAGFVMIGLVIGT), 332-352 (VFYLLIYLFMNLGAFTCVILF), 376-396 (LALSLCLLSLGGIPPLAGFFG), 398-418 (LYLFWAGWQAGAYGLVLLGLI), and 464-484 (VGLVLTLIATSLAGVLSNPLL).

This sequence belongs to the complex I subunit 2 family. NDH-1 can be composed of about 15 different subunits; different subcomplexes with different compositions have been identified which probably have different functions.

Its subcellular location is the cellular thylakoid membrane. The enzyme catalyses a plastoquinone + NADH + (n+1) H(+)(in) = a plastoquinol + NAD(+) + n H(+)(out). The catalysed reaction is a plastoquinone + NADPH + (n+1) H(+)(in) = a plastoquinol + NADP(+) + n H(+)(out). In terms of biological role, NDH-1 shuttles electrons from an unknown electron donor, via FMN and iron-sulfur (Fe-S) centers, to quinones in the respiratory and/or the photosynthetic chain. The immediate electron acceptor for the enzyme in this species is believed to be plastoquinone. Couples the redox reaction to proton translocation, and thus conserves the redox energy in a proton gradient. Cyanobacterial NDH-1 also plays a role in inorganic carbon-concentration. This is NAD(P)H-quinone oxidoreductase subunit 2 from Acaryochloris marina (strain MBIC 11017).